We begin with the raw amino-acid sequence, 374 residues long: Type II methyltransferase M.NgoFVII (374 aa).

Residues 16–344 (PKILSLFSGC…KSILPIFSDN (329 aa)) enclose the SAM-dependent MTase C5-type domain. Cysteine 88 is an active-site residue.

It belongs to the class I-like SAM-binding methyltransferase superfamily. C5-methyltransferase family.

The enzyme catalyses a 2'-deoxycytidine in DNA + S-adenosyl-L-methionine = a 5-methyl-2'-deoxycytidine in DNA + S-adenosyl-L-homocysteine + H(+). A methylase, recognizes the double-stranded sequence 5'-GCSGC-3', methylates C-5 on both strands, and protects the DNA from cleavage by the NgoFVII endonuclease. The chain is Type II methyltransferase M.NgoFVII (ngoFVIIM) from Neisseria gonorrhoeae.